An 83-amino-acid chain; its full sequence is Small ribosomal subunit protein bS16 (83 aa).

This sequence belongs to the bacterial ribosomal protein bS16 family.

The protein is Small ribosomal subunit protein bS16 of Shewanella halifaxensis (strain HAW-EB4).